The following is a 212-amino-acid chain: Protein-L-isoaspartate O-methyltransferase (212 aa).

Residue serine 60 is part of the active site.

The protein belongs to the methyltransferase superfamily. L-isoaspartyl/D-aspartyl protein methyltransferase family.

It is found in the cytoplasm. The enzyme catalyses [protein]-L-isoaspartate + S-adenosyl-L-methionine = [protein]-L-isoaspartate alpha-methyl ester + S-adenosyl-L-homocysteine. In terms of biological role, catalyzes the methyl esterification of L-isoaspartyl residues in peptides and proteins that result from spontaneous decomposition of normal L-aspartyl and L-asparaginyl residues. It plays a role in the repair and/or degradation of damaged proteins. In Pseudomonas putida (strain W619), this protein is Protein-L-isoaspartate O-methyltransferase.